Here is a 495-residue protein sequence, read N- to C-terminus: Bifunctional protein GlmU (495 aa).

The interval 1-241 is pyrophosphorylase; that stretch reads MTFPGDTAVL…SALVAGVNNR (241 aa). Residues 12-15, K26, Q83, 88-89, 112-114, G151, E166, N181, and N239 contribute to the UDP-N-acetyl-alpha-D-glucosamine site; these read LAAG, GT, and SGD. Residue D114 participates in Mg(2+) binding. Residue N239 coordinates Mg(2+). Residues 242-262 are linker; the sequence is VQLAELASELNRRVVAAHQLA. The segment at 263–495 is N-acetyltransferase; that stretch reads GVTVVDPATT…TQPPDADQTP (233 aa). Residues R344 and K362 each contribute to the UDP-N-acetyl-alpha-D-glucosamine site. H374 (proton acceptor) is an active-site residue. Y377 and N388 together coordinate UDP-N-acetyl-alpha-D-glucosamine. Residues A391, 397 to 398, S416, and A434 contribute to the acetyl-CoA site; that span reads NY. Residues 457 to 495 form a disordered region; it reads IENWVQRKRPGSPAAQASKRASEMACQQPTQPPDADQTP. Residues 483-495 show a composition bias toward low complexity; it reads QQPTQPPDADQTP.

This sequence in the N-terminal section; belongs to the N-acetylglucosamine-1-phosphate uridyltransferase family. The protein in the C-terminal section; belongs to the transferase hexapeptide repeat family. Homotrimer. Requires Mg(2+) as cofactor.

It localises to the cytoplasm. It carries out the reaction alpha-D-glucosamine 1-phosphate + acetyl-CoA = N-acetyl-alpha-D-glucosamine 1-phosphate + CoA + H(+). It catalyses the reaction N-acetyl-alpha-D-glucosamine 1-phosphate + UTP + H(+) = UDP-N-acetyl-alpha-D-glucosamine + diphosphate. The protein operates within nucleotide-sugar biosynthesis; UDP-N-acetyl-alpha-D-glucosamine biosynthesis; N-acetyl-alpha-D-glucosamine 1-phosphate from alpha-D-glucosamine 6-phosphate (route II): step 2/2. It functions in the pathway nucleotide-sugar biosynthesis; UDP-N-acetyl-alpha-D-glucosamine biosynthesis; UDP-N-acetyl-alpha-D-glucosamine from N-acetyl-alpha-D-glucosamine 1-phosphate: step 1/1. Its pathway is bacterial outer membrane biogenesis; LPS lipid A biosynthesis. Its function is as follows. Catalyzes the last two sequential reactions in the de novo biosynthetic pathway for UDP-N-acetylglucosamine (UDP-GlcNAc). The C-terminal domain catalyzes the transfer of acetyl group from acetyl coenzyme A to glucosamine-1-phosphate (GlcN-1-P) to produce N-acetylglucosamine-1-phosphate (GlcNAc-1-P), which is converted into UDP-GlcNAc by the transfer of uridine 5-monophosphate (from uridine 5-triphosphate), a reaction catalyzed by the N-terminal domain. The chain is Bifunctional protein GlmU from Mycobacterium tuberculosis (strain ATCC 25177 / H37Ra).